The sequence spans 49 residues: Light-harvesting protein B800/850/890 alpha-3 chain (49 aa).

Residues 1-14 (MNQARIWLVVKPSV) lie on the Cytoplasmic side of the membrane. Residues 15-35 (GLPLLLGVVLLIALLVHGAIL) form a helical membrane-spanning segment. Position 31 (histidine 31) interacts with a bacteriochlorophyll. At 36 to 49 (TNTSWYPTYFEGNW) the chain is on the periplasmic side.

This sequence belongs to the antenna complex alpha subunit family. As to quaternary structure, the core complex is formed by different alpha and beta chains, binding bacteriochlorophyll molecules, and arranged most probably in tetrameric structures disposed around the reaction center. The non-pigmented gamma chains may constitute additional components.

The protein localises to the cell inner membrane. In terms of biological role, antenna complexes are light-harvesting systems, which transfer the excitation energy to the reaction centers. In Halorhodospira halophila (strain DSM 244 / SL1) (Ectothiorhodospira halophila (strain DSM 244 / SL1)), this protein is Light-harvesting protein B800/850/890 alpha-3 chain.